The chain runs to 237 residues: Concanavalin-Br (237 aa).

The Mn(2+) site is built by glutamate 8 and aspartate 10. Ca(2+) contacts are provided by aspartate 10, tyrosine 12, asparagine 14, and aspartate 19. A carbohydrate is bound at residue tyrosine 12. Residues aspartate 19, histidine 24, and serine 34 each coordinate Mn(2+). A carbohydrate is bound at residue leucine 99–tyrosine 100. Aspartate 208 contributes to the Ca(2+) binding site. Arginine 228 serves as a coordination point for a carbohydrate.

This sequence belongs to the leguminous lectin family. Homotetramer.

Functionally, glucose/D-mannose specific lectin. Has anti-inflammatory activity in rats. Induces histamine release in mast cells from hamster and rat. Induces lymphocyte proliferation and IFNG production. Shows toxicity against the aquatic snail B.glabrata at concentrations higher than 20 ug/ml. The polypeptide is Concanavalin-Br (Canavalia brasiliensis (Brazilian jack bean)).